The sequence spans 466 residues: Soluble pyridine nucleotide transhydrogenase (466 aa).

36 to 45 (ERYHNVGGGC) serves as a coordination point for FAD.

Belongs to the class-I pyridine nucleotide-disulfide oxidoreductase family. FAD is required as a cofactor.

It is found in the cytoplasm. The enzyme catalyses NAD(+) + NADPH = NADH + NADP(+). Its function is as follows. Conversion of NADPH, generated by peripheral catabolic pathways, to NADH, which can enter the respiratory chain for energy generation. The polypeptide is Soluble pyridine nucleotide transhydrogenase (Salmonella gallinarum (strain 287/91 / NCTC 13346)).